A 311-amino-acid polypeptide reads, in one-letter code: Malate dehydrogenase (311 aa).

Residues G7–G13 and D34 contribute to the NAD(+) site. Positions 81 and 87 each coordinate substrate. Residues N94 and I117–N119 each bind NAD(+). N119 and R153 together coordinate substrate. H177 serves as the catalytic Proton acceptor. M227 is a binding site for NAD(+).

This sequence belongs to the LDH/MDH superfamily. MDH type 1 family. As to quaternary structure, homodimer.

It catalyses the reaction (S)-malate + NAD(+) = oxaloacetate + NADH + H(+). In terms of biological role, catalyzes the reversible oxidation of malate to oxaloacetate. The polypeptide is Malate dehydrogenase (Aliivibrio salmonicida (strain LFI1238) (Vibrio salmonicida (strain LFI1238))).